The chain runs to 552 residues: DUF724 domain-containing protein 10 (552 aa).

Positions 308-361 (SSLTQGSGDKTEVETQRKTFPKKTLPRNQNGSGNDSTLENENSNRKRKREENLC) are disordered. The span at 333-348 (PRNQNGSGNDSTLENE) shows a compositional bias: polar residues. In terms of domain architecture, DUF724 spans 371 to 543 (ILFEKKLPVW…LEFQATASAP (173 aa)).

As to expression, expressed at low levels in leaves, stems, flowers and siliques.

Its function is as follows. May be involved in the polar growth of plant cells via transportation of RNAs. This is DUF724 domain-containing protein 10 from Arabidopsis thaliana (Mouse-ear cress).